A 248-amino-acid chain; its full sequence is Ubiquinone biosynthesis O-methyltransferase (248 aa).

Arg41, Gly72, Asp93, and Met136 together coordinate S-adenosyl-L-methionine.

It belongs to the methyltransferase superfamily. UbiG/COQ3 family.

It carries out the reaction a 3-demethylubiquinol + S-adenosyl-L-methionine = a ubiquinol + S-adenosyl-L-homocysteine + H(+). The enzyme catalyses a 3-(all-trans-polyprenyl)benzene-1,2-diol + S-adenosyl-L-methionine = a 2-methoxy-6-(all-trans-polyprenyl)phenol + S-adenosyl-L-homocysteine + H(+). It functions in the pathway cofactor biosynthesis; ubiquinone biosynthesis. Functionally, O-methyltransferase that catalyzes the 2 O-methylation steps in the ubiquinone biosynthetic pathway. In Brucella melitensis biotype 2 (strain ATCC 23457), this protein is Ubiquinone biosynthesis O-methyltransferase.